Here is a 201-residue protein sequence, read N- to C-terminus: Imidazole glycerol phosphate synthase subunit HisH (201 aa).

A Glutamine amidotransferase type-1 domain is found at 1-201; it reads MIIVIDYDAG…ILKKFVDLCD (201 aa). Catalysis depends on Cys79, which acts as the Nucleophile. Active-site residues include His181 and Glu183.

As to quaternary structure, heterodimer of HisH and HisF.

The protein localises to the cytoplasm. The enzyme catalyses 5-[(5-phospho-1-deoxy-D-ribulos-1-ylimino)methylamino]-1-(5-phospho-beta-D-ribosyl)imidazole-4-carboxamide + L-glutamine = D-erythro-1-(imidazol-4-yl)glycerol 3-phosphate + 5-amino-1-(5-phospho-beta-D-ribosyl)imidazole-4-carboxamide + L-glutamate + H(+). It carries out the reaction L-glutamine + H2O = L-glutamate + NH4(+). The protein operates within amino-acid biosynthesis; L-histidine biosynthesis; L-histidine from 5-phospho-alpha-D-ribose 1-diphosphate: step 5/9. In terms of biological role, IGPS catalyzes the conversion of PRFAR and glutamine to IGP, AICAR and glutamate. The HisH subunit catalyzes the hydrolysis of glutamine to glutamate and ammonia as part of the synthesis of IGP and AICAR. The resulting ammonia molecule is channeled to the active site of HisF. The polypeptide is Imidazole glycerol phosphate synthase subunit HisH (Streptococcus mutans serotype c (strain ATCC 700610 / UA159)).